We begin with the raw amino-acid sequence, 358 residues long: Ribosomal RNA large subunit methyltransferase M (358 aa).

Residues Ser191, 224 to 227, Asp243, Asp263, and Asp279 each bind S-adenosyl-L-methionine; that span reads APGG. Lys308 acts as the Proton acceptor in catalysis.

It belongs to the class I-like SAM-binding methyltransferase superfamily. RNA methyltransferase RlmE family. RlmM subfamily. As to quaternary structure, monomer.

The protein localises to the cytoplasm. It catalyses the reaction cytidine(2498) in 23S rRNA + S-adenosyl-L-methionine = 2'-O-methylcytidine(2498) in 23S rRNA + S-adenosyl-L-homocysteine + H(+). Catalyzes the 2'-O-methylation at nucleotide C2498 in 23S rRNA. The polypeptide is Ribosomal RNA large subunit methyltransferase M (Marinobacter nauticus (strain ATCC 700491 / DSM 11845 / VT8) (Marinobacter aquaeolei)).